Consider the following 245-residue polypeptide: Outer dense fiber protein 1 (245 aa).

2 positions are modified to phosphoserine: Ser5 and Ser10. Copy 1 of the repeat occupies 34-38 (RCLCD). The segment at 34-78 (RCLCDLYMHPYCCCDLHPYPYCLCYSKRSRSCGLCDLYYPCCLCD) is 2 X 5 AA repeats of [RC]-C-L-C-D. A Phosphoserine modification is found at Ser64. The stretch at 74-78 (CCLCD) is repeat 2. Phosphoserine occurs at positions 87, 108, 109, 137, 153, 175, and 180. Residues 195 to 233 (CNPCNPCSPCSPCGPCGPCGPCGPCGPCGPCDPCNPCYP) are C-X-P repeat region.

In terms of assembly, interacts (via leucine zipper motif) with TCP11. Interacts with SPAG4. Interacts with KLC3. Interacts with CCDC42. Testis. Specifically located to the round spermatid layer and to the luminally-oriented cytoplasm of elongated spermatids.

It localises to the cell projection. The protein localises to the cilium. Its subcellular location is the flagellum. It is found in the cytoplasm. The protein resides in the cytoskeleton. It localises to the microtubule organizing center. The protein localises to the centrosome. Component of the outer dense fibers (ODF) of spermatozoa. ODF are filamentous structures located on the outside of the axoneme in the midpiece and principal piece of the mammalian sperm tail and may help to maintain the passive elastic structures and elastic recoil of the sperm tail. This chain is Outer dense fiber protein 1 (Odf1), found in Rattus norvegicus (Rat).